The chain runs to 609 residues: Major facilitator superfamily domain-containing protein 6-like protein A (609 aa).

A run of 2 helical transmembrane segments spans residues 41-61 (LGLGAPLVGIIFGFKHAVHLL) and 78-98 (FFIMTSLLLSAGVGSLFAYYP). A disordered region spans residues 201–241 (SGKAQKVMSSKSAASNSKQRSSLNNHTSPYATHPNVSHHPS). The segment covering 207 to 230 (VMSSKSAASNSKQRSSLNNHTSPY) has biased composition (polar residues). The next 9 membrane-spanning stretches (helical) occupy residues 265–285 (IFLIVLVLVIIWEILAAPLEW), 307–327 (LWIWGYLGASMGSIFITFLVD), 340–360 (VFFHFFCYGGFLIGTLFLSTL), 388–408 (IVLTALTVFLLGAVGSTTQNF), 420–440 (ELYMGLSIAVGLLSELTLYFF), 452–472 (WMVALGLFSLGVQCLYYSFLW), 475–495 (WSVLAIQILNAFSSGVIWWAI), 513–535 (LALRWLAYGCGSSTGSFASGFII), and 541–561 (AVLYQACCITLLLWIIIFLLV).

The protein belongs to the major facilitator superfamily. MFSD6 family.

The protein resides in the membrane. This Xenopus laevis (African clawed frog) protein is Major facilitator superfamily domain-containing protein 6-like protein A (mfsd6l-a).